The following is a 467-amino-acid chain: Asparagine--tRNA ligase (467 aa).

It belongs to the class-II aminoacyl-tRNA synthetase family. In terms of assembly, homodimer.

The protein localises to the cytoplasm. It carries out the reaction tRNA(Asn) + L-asparagine + ATP = L-asparaginyl-tRNA(Asn) + AMP + diphosphate + H(+). The sequence is that of Asparagine--tRNA ligase from Legionella pneumophila (strain Lens).